The sequence spans 421 residues: Medium-chain specific acyl-CoA dehydrogenase, mitochondrial (421 aa).

The transit peptide at 1–25 (MAAAFRRGCRVLRSVSHFECRTQHS) directs the protein to the mitochondrion. N6-acetyllysine; alternate occurs at positions 30 and 69. N6-succinyllysine; alternate occurs at positions 30 and 69. Lys79 bears the N6-acetyllysine mark. 158-167 (YCVTEPSAGS) is a binding site for FAD. An octanoyl-CoA-binding site is contributed by Ser167. The residue at position 179 (Lys179) is an N6-succinyllysine. 191 to 193 (WIT) contributes to the FAD binding site. Position 212 is an N6-acetyllysine; alternate (Lys212). Lys212 carries the post-translational modification N6-succinyllysine; alternate. Ser216 provides a ligand contact to octanoyl-CoA. Lys217, Lys235, Lys259, and Lys271 each carry N6-acetyllysine; alternate. N6-succinyllysine; alternate is present on residues Lys217, Lys235, Lys259, and Lys271. Residues Asp278 and Arg281 each contribute to the octanoyl-CoA site. Lys301 is subject to N6-acetyllysine. Residues 306–308 (RKT) and 316–317 (HQ) each bind FAD. Octanoyl-CoA is bound by residues Arg349 and Thr351. Thr351 carries the phosphothreonine modification. An FAD-binding site is contributed by 374–378 (QIFGG). Residue Glu401 coordinates octanoyl-CoA. Glu401 (proton acceptor) is an active-site residue. An FAD-binding site is contributed by 402-405 (GTAQ).

Belongs to the acyl-CoA dehydrogenase family. In terms of assembly, homotetramer. Interacts with the heterodimeric electron transfer flavoprotein ETF. It depends on FAD as a cofactor. Acetylated. Could occur at proximity of the cofactor-binding sites and reduce the catalytic activity. Could be deacetylated by SIRT3.

Its subcellular location is the mitochondrion matrix. The enzyme catalyses a medium-chain 2,3-saturated fatty acyl-CoA + oxidized [electron-transfer flavoprotein] + H(+) = a medium-chain (2E)-enoyl-CoA + reduced [electron-transfer flavoprotein]. The catalysed reaction is pentanoyl-CoA + oxidized [electron-transfer flavoprotein] + H(+) = (2E)-pentenoyl-CoA + reduced [electron-transfer flavoprotein]. It carries out the reaction hexanoyl-CoA + oxidized [electron-transfer flavoprotein] + H(+) = (2E)-hexenoyl-CoA + reduced [electron-transfer flavoprotein]. It catalyses the reaction octanoyl-CoA + oxidized [electron-transfer flavoprotein] + H(+) = (2E)-octenoyl-CoA + reduced [electron-transfer flavoprotein]. The enzyme catalyses decanoyl-CoA + oxidized [electron-transfer flavoprotein] + H(+) = (2E)-decenoyl-CoA + reduced [electron-transfer flavoprotein]. The catalysed reaction is dodecanoyl-CoA + oxidized [electron-transfer flavoprotein] + H(+) = (2E)-dodecenoyl-CoA + reduced [electron-transfer flavoprotein]. It carries out the reaction tetradecanoyl-CoA + oxidized [electron-transfer flavoprotein] + H(+) = (2E)-tetradecenoyl-CoA + reduced [electron-transfer flavoprotein]. It catalyses the reaction oxidized [electron-transfer flavoprotein] + hexadecanoyl-CoA + H(+) = (2E)-hexadecenoyl-CoA + reduced [electron-transfer flavoprotein]. Its pathway is lipid metabolism; mitochondrial fatty acid beta-oxidation. In terms of biological role, medium-chain specific acyl-CoA dehydrogenase is one of the acyl-CoA dehydrogenases that catalyze the first step of mitochondrial fatty acid beta-oxidation, an aerobic process breaking down fatty acids into acetyl-CoA and allowing the production of energy from fats. The first step of fatty acid beta-oxidation consists in the removal of one hydrogen from C-2 and C-3 of the straight-chain fatty acyl-CoA thioester, resulting in the formation of trans-2-enoyl-CoA. Electron transfer flavoprotein (ETF) is the electron acceptor that transfers electrons to the main mitochondrial respiratory chain via ETF-ubiquinone oxidoreductase (ETF dehydrogenase). Among the different mitochondrial acyl-CoA dehydrogenases, medium-chain specific acyl-CoA dehydrogenase acts specifically on acyl-CoAs with saturated 6 to 12 carbons long primary chains. This Mus musculus (Mouse) protein is Medium-chain specific acyl-CoA dehydrogenase, mitochondrial.